Here is a 122-residue protein sequence, read N- to C-terminus: Large ribosomal subunit protein uL14c (122 aa).

It belongs to the universal ribosomal protein uL14 family. As to quaternary structure, part of the 50S ribosomal subunit.

It is found in the plastid. Binds to 23S rRNA. This chain is Large ribosomal subunit protein uL14c, found in Euglena longa (Euglenophycean alga).